The primary structure comprises 261 residues: Small ribosomal subunit protein uS2 (261 aa).

Position 2 is an N-acetylserine (S2). Residues 211–261 form a disordered region; it reads EQNAAEDSKAEDAEEAPVADAEPDWSGETEDVDWAESGATPAAEEAAASNW. A compositionally biased stretch (acidic residues) spans 222–244; the sequence is DAEEAPVADAEPDWSGETEDVDW. Positions 245–261 are enriched in low complexity; sequence AESGATPAAEEAAASNW.

The protein belongs to the universal ribosomal protein uS2 family. In terms of assembly, component of the small ribosomal subunit. Mature ribosomes consist of a small (40S) and a large (60S) subunit. The 40S subunit contains about 33 different proteins and 1 molecule of RNA (18S). The 60S subunit contains about 49 different proteins and 3 molecules of RNA (25S, 5.8S and 5S). Interacts with RPS21.

Its subcellular location is the cytoplasm. Its function is as follows. Required for the assembly and/or stability of the 40S ribosomal subunit. Required for the processing of the 20S rRNA-precursor to mature 18S rRNA in a late step of the maturation of 40S ribosomal subunits. The polypeptide is Small ribosomal subunit protein uS2 (Meyerozyma guilliermondii (strain ATCC 6260 / CBS 566 / DSM 6381 / JCM 1539 / NBRC 10279 / NRRL Y-324) (Yeast)).